The sequence spans 148 residues: Large ribosomal subunit protein uL15 (148 aa).

The tract at residues 1–50 (MNLSNLKPAEGSTKTRKRIGRGPGSGLGGTSTRGHKGAKSRSGYSKKIGF) is disordered. Over residues 21 to 31 (RGPGSGLGGTS) the composition is skewed to gly residues.

It belongs to the universal ribosomal protein uL15 family. As to quaternary structure, part of the 50S ribosomal subunit.

Functionally, binds to the 23S rRNA. The chain is Large ribosomal subunit protein uL15 from Bacteroides fragilis (strain ATCC 25285 / DSM 2151 / CCUG 4856 / JCM 11019 / LMG 10263 / NCTC 9343 / Onslow / VPI 2553 / EN-2).